We begin with the raw amino-acid sequence, 230 residues long: Cytidylate kinase (230 aa).

Residue 12–20 (GPSGTGKST) coordinates ATP.

Belongs to the cytidylate kinase family. Type 1 subfamily.

It is found in the cytoplasm. It carries out the reaction CMP + ATP = CDP + ADP. It catalyses the reaction dCMP + ATP = dCDP + ADP. This chain is Cytidylate kinase, found in Corynebacterium glutamicum (strain ATCC 13032 / DSM 20300 / JCM 1318 / BCRC 11384 / CCUG 27702 / LMG 3730 / NBRC 12168 / NCIMB 10025 / NRRL B-2784 / 534).